Consider the following 72-residue polypeptide: Brevinin-2SN3 (72 aa).

The N-terminal stretch at 1–22 (MFTLKKPLLLLVFLGMISLSLC) is a signal peptide. Residues 23–40 (QDERGADEDDGGEMTEEE) constitute a propeptide, removed in mature form. A disulfide bond links Cys-66 and Cys-72.

The protein belongs to the frog skin active peptide (FSAP) family. Brevinin subfamily. As to expression, expressed by the skin glands.

The protein resides in the secreted. Functionally, antimicrobial peptide. Active against a variety of Gram-negative and Gram-positive bacterial strains. Active against fungus C.glabrata 090902 but not against C.albicans ATCC 10231. Shows hemolytic activity against human erythrocytes. In Sylvirana spinulosa (Fine-spined frog), this protein is Brevinin-2SN3.